A 195-amino-acid chain; its full sequence is L-rhamnose-binding lectin CSL3 (195 aa).

2 SUEL-type lectin domains span residues 1 to 95 and 105 to 195; these read AISI…YSCV and ICEG…YTCD.

Its function is as follows. L-rhamnose binding lectin. Has hemagglutinating activity towards rabbit erythrocytes, human type A erythrocytes, human type B erythrocytes, human type O erythrocytes and sheep erythrocytes. Hemagglutinating activity is inhibited by smooth-type lipopolysaccharide (LPS) from S.flexneri 1A, A.salmonicida and E.coli K12, but not by rough-type LPS from S.flexneri, E.coli K12 and E.coli EH100. Agglutinates E.coli K12 and B.subtilis. This Oncorhynchus keta (Chum salmon) protein is L-rhamnose-binding lectin CSL3.